An 86-amino-acid chain; its full sequence is Cell division topological specificity factor (86 aa).

It belongs to the MinE family.

Functionally, prevents the cell division inhibition by proteins MinC and MinD at internal division sites while permitting inhibition at polar sites. This ensures cell division at the proper site by restricting the formation of a division septum at the midpoint of the long axis of the cell. This is Cell division topological specificity factor from Stenotrophomonas maltophilia (strain K279a).